Consider the following 153-residue polypeptide: Large ribosomal subunit protein uL30 (153 aa).

It belongs to the universal ribosomal protein uL30 family. As to quaternary structure, part of the 50S ribosomal subunit.

This chain is Large ribosomal subunit protein uL30, found in Methanocorpusculum labreanum (strain ATCC 43576 / DSM 4855 / Z).